A 422-amino-acid polypeptide reads, in one-letter code: Choline monooxygenase, chloroplastic (422 aa).

The N-terminal 47 residues, 1–47 (MMTTLTATVPEFLPPSLKSTRGYFNSHSEFGVSISKFSRRRFHNPTR), are a transit peptide targeting the chloroplast. In terms of domain architecture, Rieske spans 96 to 203 (WQAVGYSDQI…VAVWGPFVLL (108 aa)). 4 residues coordinate [2Fe-2S] cluster: Cys138, His140, Cys157, and His160. Fe cation contacts are provided by His269 and His274.

Belongs to the choline monooxygenase family. [2Fe-2S] cluster serves as cofactor. Fe cation is required as a cofactor. Requires Mg(2+) as cofactor.

The protein localises to the plastid. The protein resides in the chloroplast stroma. The catalysed reaction is choline + 2 reduced [2Fe-2S]-[ferredoxin] + O2 + 2 H(+) = betaine aldehyde hydrate + 2 oxidized [2Fe-2S]-[ferredoxin] + H2O. Its pathway is amine and polyamine biosynthesis; betaine biosynthesis via choline pathway; betaine aldehyde from choline (monooxygenase route): step 1/1. Catalyzes the first step of the osmoprotectant glycine betaine synthesis. This is Choline monooxygenase, chloroplastic from Arabidopsis thaliana (Mouse-ear cress).